Here is a 99-residue protein sequence, read N- to C-terminus: Large ribosomal subunit protein bL28 (99 aa).

The protein belongs to the bacterial ribosomal protein bL28 family.

The chain is Large ribosomal subunit protein bL28 from Brucella anthropi (strain ATCC 49188 / DSM 6882 / CCUG 24695 / JCM 21032 / LMG 3331 / NBRC 15819 / NCTC 12168 / Alc 37) (Ochrobactrum anthropi).